The chain runs to 781 residues: Envelope glycoprotein (781 aa).

Residues Met-1–Lys-597 lie on the Extracellular side of the membrane. N-linked (GlcNAc...) asparagine; by host glycans are attached at residues Asn-189, Asn-212, Asn-241, Asn-266, Asn-285, Asn-301, Asn-309, and Asn-382. The tract at residues Ala-423–Thr-443 is fusion peptide. Asn-464 carries N-linked (GlcNAc...) asparagine; by host glycosylation. Residues Leu-482–Phe-498 are immunosuppression. 3 N-linked (GlcNAc...) asparagine; by host glycosylation sites follow: Asn-530, Asn-535, and Asn-559. Residues Leu-598–Met-618 traverse the membrane as a helical segment. The Cytoplasmic portion of the chain corresponds to Ser-619–Met-781. Positions Glu-634–Gln-644 are enriched in acidic residues. The disordered stretch occupies residues Glu-634–Lys-666.

As to quaternary structure, the mature envelope protein (Env) consists of a trimer of SU-TM heterodimers attached by non-covalent interactions or by a labile interchain disulfide bond. Post-translationally, specific enzymatic cleavages in vivo yield mature proteins. Envelope glycoproteins are synthesized as an inactive precursor that is N-glycosylated and processed likely by host cell furin or by a furin-like protease in the Golgi to yield the mature SU and TM proteins. The cleavage site between SU and TM requires the minimal sequence [KR]-X-[KR]-R.

The protein resides in the virion membrane. It localises to the host cell membrane. Its function is as follows. The surface protein (SU) attaches the virus to the host cell by binding to its receptor. This interaction triggers the refolding of the transmembrane protein (TM) and is thought to activate its fusogenic potential by unmasking its fusion peptide. Fusion occurs at the host cell plasma membrane. The transmembrane protein (TM) acts as a class I viral fusion protein. Under the current model, the protein has at least 3 conformational states: pre-fusion native state, pre-hairpin intermediate state, and post-fusion hairpin state. During viral and target cell membrane fusion, the coiled coil regions (heptad repeats) assume a trimer-of-hairpins structure, positioning the fusion peptide in close proximity to the C-terminal region of the ectodomain. The formation of this structure appears to drive apposition and subsequent fusion of viral and target cell membranes. Membranes fusion leads to delivery of the nucleocapsid into the cytoplasm. The protein is Envelope glycoprotein (env) of Bos javanicus (Wild banteng).